The primary structure comprises 641 residues: Tetracycline resistance protein TetQ (641 aa).

The region spanning 1-244 (MNIINLGILA…AITSFILPPA (244 aa)) is the tr-type G domain. Residues 10–17 (AHIDAGKT), 74–78 (DTPGH), and 128–131 (NKID) each bind GTP.

It belongs to the TRAFAC class translation factor GTPase superfamily. Classic translation factor GTPase family. TetM/TetO subfamily.

Functionally, abolishes the inhibitory effect of tetracyclin on protein synthesis by a non-covalent modification of the ribosomes. In Xylanibacter ruminicola (Prevotella ruminicola), this protein is Tetracycline resistance protein TetQ (tetQ).